The following is an 85-amino-acid chain: MAHKKAGGSTKNGRDSESKRLGVKRFGGESVLAGNIIVRQRGTRFHAGDNMGIGKDHTLFALKDGKVQFDVKGPKNRKFVSIVAE.

Positions 1 to 22 (MAHKKAGGSTKNGRDSESKRLG) are disordered.

The protein belongs to the bacterial ribosomal protein bL27 family.

The chain is Large ribosomal subunit protein bL27 from Alteromonas mediterranea (strain DSM 17117 / CIP 110805 / LMG 28347 / Deep ecotype).